A 345-amino-acid chain; its full sequence is Acetylserotonin O-methyltransferase (345 aa).

S-adenosyl-L-methionine contacts are provided by residues tyrosine 147, tryptophan 164, aspartate 210, glycine 235 to phenylalanine 237, and arginine 252. Histidine 255 (proton donor/acceptor) is an active-site residue. The substrate site is built by aspartate 256, asparagine 302, and glutamine 306.

It belongs to the class I-like SAM-binding methyltransferase superfamily. Cation-independent O-methyltransferase family. As to quaternary structure, homodimer. In terms of tissue distribution, expressed in the pineal gland (at protein level). In the retina, very low expression is found at the mRNA level, and not at the protein level.

The enzyme catalyses N-acetylserotonin + S-adenosyl-L-methionine = melatonin + S-adenosyl-L-homocysteine + H(+). The protein operates within aromatic compound metabolism; melatonin biosynthesis; melatonin from serotonin: step 1/2. Functionally, catalyzes the transfer of a methyl group onto N-acetylserotonin, producing melatonin (N-acetyl-5-methoxytryptamine). Does not show Acetylserotonin O-methyltransferase activity. In Homo sapiens (Human), this protein is Acetylserotonin O-methyltransferase (ASMT).